A 90-amino-acid polypeptide reads, in one-letter code: DNA-directed RNA polymerase subunit omega (90 aa).

This sequence belongs to the RNA polymerase subunit omega family. As to quaternary structure, the RNAP catalytic core consists of 2 alpha, 1 beta, 1 beta' and 1 omega subunit. When a sigma factor is associated with the core the holoenzyme is formed, which can initiate transcription.

The enzyme catalyses RNA(n) + a ribonucleoside 5'-triphosphate = RNA(n+1) + diphosphate. Functionally, promotes RNA polymerase assembly. Latches the N- and C-terminal regions of the beta' subunit thereby facilitating its interaction with the beta and alpha subunits. This is DNA-directed RNA polymerase subunit omega from Saccharophagus degradans (strain 2-40 / ATCC 43961 / DSM 17024).